Consider the following 210-residue polypeptide: uncharacterized protein (210 aa).

Residues 90 to 193 enclose the Fe2OG dioxygenase domain; that stretch reads KPDQIIVNEY…RISITFRNVI (104 aa).

This is an uncharacterized protein from Acanthamoeba polyphaga (Amoeba).